Reading from the N-terminus, the 365-residue chain is uncharacterized protein (365 aa).

2 disordered regions span residues 218 to 262 and 315 to 342; these read QRPS…AEAA and PRLP…RTPC. Composition is skewed to basic and acidic residues over residues 239–257 and 331–341; these read PDNR…KDPE and MEFRNLSDRTP.

This is an uncharacterized protein from Mus musculus (Mouse).